Consider the following 379-residue polypeptide: Homoserine O-succinyltransferase (379 aa).

The region spanning 51–360 (NAVLICHALS…DSPYGHDAFL (310 aa)) is the AB hydrolase-1 domain. Serine 157 serves as the catalytic Nucleophile. Substrate is bound at residue arginine 227. Active-site residues include aspartate 323 and histidine 356. Aspartate 357 is a binding site for substrate.

Belongs to the AB hydrolase superfamily. MetX family. Homodimer.

Its subcellular location is the cytoplasm. It catalyses the reaction L-homoserine + succinyl-CoA = O-succinyl-L-homoserine + CoA. The protein operates within amino-acid biosynthesis; L-methionine biosynthesis via de novo pathway; O-succinyl-L-homoserine from L-homoserine: step 1/1. In terms of biological role, transfers a succinyl group from succinyl-CoA to L-homoserine, forming succinyl-L-homoserine. The protein is Homoserine O-succinyltransferase of Pseudomonas putida (strain W619).